The primary structure comprises 148 residues: Large ribosomal subunit protein uL13 (148 aa).

The protein belongs to the universal ribosomal protein uL13 family. Part of the 50S ribosomal subunit.

This protein is one of the early assembly proteins of the 50S ribosomal subunit, although it is not seen to bind rRNA by itself. It is important during the early stages of 50S assembly. This is Large ribosomal subunit protein uL13 from Oenococcus oeni (strain ATCC BAA-331 / PSU-1).